Here is a 1058-residue protein sequence, read N- to C-terminus: Carbamoyl phosphate synthase large chain (1058 aa).

Residues 1–401 form a carboxyphosphate synthetic domain region; sequence MPKRTDIQKI…SLLKACRSLE (401 aa). Arginine 129, arginine 169, glycine 175, glycine 176, arginine 208, isoleucine 210, glutamate 215, glycine 241, isoleucine 242, histidine 243, glutamine 284, and glutamate 298 together coordinate ATP. The 195-residue stretch at 133 to 327 folds into the ATP-grasp 1 domain; the sequence is KQLMEELEQP…IAKLAAKIAV (195 aa). The Mg(2+) site is built by glutamine 284, glutamate 298, and asparagine 300. Positions 284, 298, and 300 each coordinate Mn(2+). An oligomerization domain region spans residues 402-546; sequence IGVHHNEIPE…YSTYGWENES (145 aa). The carbamoyl phosphate synthetic domain stretch occupies residues 547–929; it reads IRSDKESVLV…ALYKAFEASY (383 aa). Residues 671–861 form the ATP-grasp 2 domain; sequence EQALKELDIP…MAQVATKLIL (191 aa). 10 residues coordinate ATP: arginine 707, serine 746, isoleucine 748, glutamate 752, glycine 777, valine 778, histidine 779, serine 780, glutamine 820, and glutamate 832. Mg(2+) contacts are provided by glutamine 820, glutamate 832, and asparagine 834. The Mn(2+) site is built by glutamine 820, glutamate 832, and asparagine 834. Residues 930–1058 form the MGS-like domain; it reads LHLPTFGNVV…ESRSFVTEAI (129 aa). The tract at residues 930–1058 is allosteric domain; that stretch reads LHLPTFGNVV…ESRSFVTEAI (129 aa).

This sequence belongs to the CarB family. In terms of assembly, composed of two chains; the small (or glutamine) chain promotes the hydrolysis of glutamine to ammonia, which is used by the large (or ammonia) chain to synthesize carbamoyl phosphate. Tetramer of heterodimers (alpha,beta)4. It depends on Mg(2+) as a cofactor. Requires Mn(2+) as cofactor.

The catalysed reaction is hydrogencarbonate + L-glutamine + 2 ATP + H2O = carbamoyl phosphate + L-glutamate + 2 ADP + phosphate + 2 H(+). It carries out the reaction hydrogencarbonate + NH4(+) + 2 ATP = carbamoyl phosphate + 2 ADP + phosphate + 2 H(+). The protein operates within amino-acid biosynthesis; L-arginine biosynthesis; carbamoyl phosphate from bicarbonate: step 1/1. Its pathway is pyrimidine metabolism; UMP biosynthesis via de novo pathway; (S)-dihydroorotate from bicarbonate: step 1/3. Functionally, large subunit of the glutamine-dependent carbamoyl phosphate synthetase (CPSase). CPSase catalyzes the formation of carbamoyl phosphate from the ammonia moiety of glutamine, carbonate, and phosphate donated by ATP, constituting the first step of 2 biosynthetic pathways, one leading to arginine and/or urea and the other to pyrimidine nucleotides. The large subunit (synthetase) binds the substrates ammonia (free or transferred from glutamine from the small subunit), hydrogencarbonate and ATP and carries out an ATP-coupled ligase reaction, activating hydrogencarbonate by forming carboxy phosphate which reacts with ammonia to form carbamoyl phosphate. This Streptococcus pneumoniae (strain 70585) protein is Carbamoyl phosphate synthase large chain.